The chain runs to 509 residues: uncharacterized protein (509 aa).

The 123-residue stretch at 358–480 folds into the RNase NYN domain; sequence RRIVIIDAIS…IIPFIVENGE (123 aa).

This is an uncharacterized protein from Methanocaldococcus jannaschii (strain ATCC 43067 / DSM 2661 / JAL-1 / JCM 10045 / NBRC 100440) (Methanococcus jannaschii).